A 285-amino-acid chain; its full sequence is Energy-coupling factor transporter ATP-binding protein EcfA2 (285 aa).

The ABC transporter domain maps to Ile3–Leu245. Gly40–Ser47 contributes to the ATP binding site. Glu171 acts as the Proton acceptor in catalysis.

This sequence belongs to the ABC transporter superfamily. Energy-coupling factor EcfA family. Forms a stable energy-coupling factor (ECF) transporter complex probably composed of 2 membrane-embedded substrate-binding proteins (S component), 2 ATP-binding proteins (A component) and 2 transmembrane proteins (T component). This complex interacts with a number of substrate-specific components, including FolT, PanT and RibU for 5-formyltetrahydrofolate, pantothenate and riboflavin respectively.

The protein resides in the cell membrane. ATP-binding (A) component of a common energy-coupling factor (ECF) ABC-transporter complex. Unlike classic ABC transporters this ECF transporter provides the energy necessary to transport a number of different substrates including 5-formyltetrahydrofolate, pantothenate and riboflavin. Expression of the complex plus FolT in E.coli allows 5-formyltetrahydrofolate uptake; 5-formyltetrahydrofolate is not taken up in the absence of FolT or the EcfA1A2T complex. The chain is Energy-coupling factor transporter ATP-binding protein EcfA2 from Leuconostoc mesenteroides subsp. mesenteroides (strain ATCC 8293 / DSM 20343 / BCRC 11652 / CCM 1803 / JCM 6124 / NCDO 523 / NBRC 100496 / NCIMB 8023 / NCTC 12954 / NRRL B-1118 / 37Y).